The primary structure comprises 292 residues: Ribosomal protein L11 methyltransferase (292 aa).

S-adenosyl-L-methionine is bound by residues T143, G164, D186, and N228.

The protein belongs to the methyltransferase superfamily. PrmA family.

The protein localises to the cytoplasm. The enzyme catalyses L-lysyl-[protein] + 3 S-adenosyl-L-methionine = N(6),N(6),N(6)-trimethyl-L-lysyl-[protein] + 3 S-adenosyl-L-homocysteine + 3 H(+). Functionally, methylates ribosomal protein L11. The polypeptide is Ribosomal protein L11 methyltransferase (Aeromonas salmonicida (strain A449)).